A 303-amino-acid polypeptide reads, in one-letter code: Glutathione transport system permease protein GsiD (303 aa).

7 consecutive transmembrane segments (helical) span residues 37–57 (QHVA…AIFA), 105–125 (LAAG…LGLL), 144–164 (LFAF…GSGI), 165–185 (ANVI…LVRG), 208–228 (TILF…FFTM), 230–250 (IGTS…AQPP), and 266–286 (VIAP…VLAF). An ABC transmembrane type-1 domain is found at 101-290 (AQISLAAGVF…LTVLAFNLLG (190 aa)).

Belongs to the binding-protein-dependent transport system permease family. In terms of assembly, the complex is composed of two ATP-binding proteins (GsiA), two transmembrane proteins (GsiC and GsiD) and a solute-binding protein (GsiB).

The protein localises to the cell inner membrane. Its function is as follows. Part of the ABC transporter complex GsiABCD involved in glutathione import. Probably responsible for the translocation of the substrate across the membrane. The polypeptide is Glutathione transport system permease protein GsiD (Salmonella paratyphi A (strain ATCC 9150 / SARB42)).